Reading from the N-terminus, the 439-residue chain is Probable guanine deaminase (439 aa).

The Zn(2+) site is built by H76 and H78. Residues 78 to 81 (HYPQ), 203 to 204 (RF), 231 to 234 (HINE), and D321 each bind substrate. Positions 231 and 321 each coordinate Zn(2+).

The protein belongs to the metallo-dependent hydrolases superfamily. ATZ/TRZ family. Zn(2+) is required as a cofactor.

The catalysed reaction is guanine + H2O + H(+) = xanthine + NH4(+). It functions in the pathway purine metabolism; guanine degradation; xanthine from guanine: step 1/1. Its function is as follows. Catalyzes the hydrolytic deamination of guanine, producing xanthine and ammonia. This Deinococcus radiodurans (strain ATCC 13939 / DSM 20539 / JCM 16871 / CCUG 27074 / LMG 4051 / NBRC 15346 / NCIMB 9279 / VKM B-1422 / R1) protein is Probable guanine deaminase (guaD).